The primary structure comprises 142 residues: Hemoglobin subunit alpha-4 (142 aa).

The Globin domain occupies threonine 2–arginine 142. Residue histidine 59 participates in O2 binding. Histidine 88 contacts heme b.

It belongs to the globin family. As to quaternary structure, heterotetramer of two alpha chains and two beta chains. As to expression, red blood cells.

Functionally, this is a larval (tadpole) alpha-globin. In Xenopus laevis (African clawed frog), this protein is Hemoglobin subunit alpha-4 (hba4).